The chain runs to 149 residues: Calmodulin-6 (149 aa).

4 consecutive EF-hand domains span residues 8 to 43 (DQIS…LGQN), 44 to 79 (PTEA…KMKD), 81 to 116 (DSEE…LGEK), and 117 to 149 (LSDE…MMAK). Positions 21, 23, 25, 27, 32, 57, 59, 61, 63, 68, 94, 96, 98, 105, 130, 132, 134, 136, and 141 each coordinate Ca(2+).

It belongs to the calmodulin family. Interacts with KCBP.

Its function is as follows. Calmodulin mediates the control of a large number of enzymes, ion channels and other proteins by Ca(2+). Among the enzymes to be stimulated by the calmodulin-Ca(2+) complex are a number of protein kinases and phosphatases. The protein is Calmodulin-6 (CAM6) of Arabidopsis thaliana (Mouse-ear cress).